The following is a 371-amino-acid chain: tRNA-specific 2-thiouridylase MnmA (371 aa).

Residues 12–19 (GMSGGVDS) and Met38 each bind ATP. The segment at 98 to 100 (NPD) is interaction with target base in tRNA. Cys103 functions as the Nucleophile in the catalytic mechanism. An intrachain disulfide couples Cys103 to Cys200. Gly127 is a binding site for ATP. The interval 150–152 (KDQ) is interaction with tRNA. The active-site Cysteine persulfide intermediate is Cys200. The segment at 308-309 (RY) is interaction with tRNA.

It belongs to the MnmA/TRMU family.

The protein resides in the cytoplasm. The enzyme catalyses S-sulfanyl-L-cysteinyl-[protein] + uridine(34) in tRNA + AH2 + ATP = 2-thiouridine(34) in tRNA + L-cysteinyl-[protein] + A + AMP + diphosphate + H(+). In terms of biological role, catalyzes the 2-thiolation of uridine at the wobble position (U34) of tRNA, leading to the formation of s(2)U34. This chain is tRNA-specific 2-thiouridylase MnmA, found in Oceanobacillus iheyensis (strain DSM 14371 / CIP 107618 / JCM 11309 / KCTC 3954 / HTE831).